The primary structure comprises 159 residues: MEKLSEKDKELIRGSWESLGKNKVPHGVVMFSRLFELDPELLTLFHYTTNCGSTQDCLSSPEFLEHVTKVMLVIDAAVSNLDDLPSLEDFLLNLGRKHQAVGVNTQSFAEVGESLLHMLQCSLGQAYTAPLRQAWLNLYSIVVAAMSQGWAKNGEDKAD.

The region spanning Lys-3–Ala-151 is the Globin domain. The heme b site is built by His-66 and His-98.

Belongs to the globin family. As to quaternary structure, monomer. Homodimers and homotetramers. Mainly monomeric but also detected as part of homodimers and homotetramers.

The protein resides in the cytoplasm. It is found in the cytosol. Its subcellular location is the mitochondrion matrix. The enzyme catalyses Fe(III)-heme b-[protein] + nitric oxide + H2O = Fe(II)-heme b-[protein] + nitrite + 2 H(+). Functionally, monomeric globin with a bis-histidyl six-coordinate heme-iron atom through which it can bind dioxygen, carbon monoxide and nitric oxide. Could help transport oxygen and increase its availability to the metabolically active neuronal tissues, though its low quantity in tissues as well as its high affinity for dioxygen, which may limit its oxygen-releasing ability, argue against it. The ferrous/deoxygenated form exhibits a nitrite reductase activity and it could produce nitric oxide which in turn inhibits cellular respiration in response to hypoxia. In its ferrous/deoxygenated state, it may also exhibit GDI (Guanine nucleotide Dissociation Inhibitor) activity toward heterotrimeric G-alpha proteins, thereby regulating signal transduction to facilitate neuroprotective responses in the wake of hypoxia and associated oxidative stress. The protein is Neuroglobin (ngb) of Dissostichus mawsoni (Antarctic cod).